A 139-amino-acid polypeptide reads, in one-letter code: Small ribosomal subunit protein uS19 (139 aa).

This sequence belongs to the universal ribosomal protein uS19 family.

Its function is as follows. Protein S19 forms a complex with S13 that binds strongly to the 16S ribosomal RNA. The chain is Small ribosomal subunit protein uS19 from Ignicoccus hospitalis (strain KIN4/I / DSM 18386 / JCM 14125).